A 356-amino-acid chain; its full sequence is MGSLEKERTTTGWAARDPSGVLSPYTYSLRNTGPEDLYIKVLSCGICHSDIHQIKNDLGMSHYPMVPGHEVVGEVLEVGSEVTKYRVGDRVGTGIVVGCCRSCSPCNSDQEQYCNKKIWNYNDVYTDGKPTQGGFAGEIVVGERFVVKIPDGLESEQAAPLMCAGVTVYSPLVRFGLKQSGLRGGILGLGGVGHMGVKIAKAMGHHVTVISSSDKKRTEALEHLGADAYLVSSDENGMKEATDSLDYIFDTIPVVHPLEPYLALLKLDGKLILTGVINAPLQFISPMVMLGRKSITGSFIGSMKETEEMLEFCKEKGLTSQIEVIKMDYVNTALERLEKNDVRYRFVVDVVGSKLD.

Residue cysteine 47 coordinates Zn(2+). Serine 49 lines the NADP(+) pocket. The Zn(2+) site is built by histidine 69, glutamate 70, cysteine 100, cysteine 103, cysteine 106, cysteine 114, and cysteine 163. NADP(+) contacts are provided by residues threonine 167, 188–193 (GLGGVG), 211–216 (SSSDKK), threonine 251, glycine 275, and 298–300 (SFI).

The protein belongs to the zinc-containing alcohol dehydrogenase family. Homodimer. Zn(2+) is required as a cofactor.

It catalyses the reaction (E)-cinnamyl alcohol + NADP(+) = (E)-cinnamaldehyde + NADPH + H(+). The enzyme catalyses (E)-coniferol + NADP(+) = (E)-coniferaldehyde + NADPH + H(+). It carries out the reaction (E)-sinapyl alcohol + NADP(+) = (E)-sinapaldehyde + NADPH + H(+). The catalysed reaction is (E)-4-coumaroyl alcohol + NADP(+) = (E)-4-coumaraldehyde + NADPH + H(+). It catalyses the reaction (E)-caffeyl alcohol + NADP(+) = (E)-caffeyl aldehyde + NADPH + H(+). Its pathway is aromatic compound metabolism; phenylpropanoid biosynthesis. Its function is as follows. Involved in lignin biosynthesis. Catalyzes the final step specific for the production of lignin monomers. Catalyzes the NADPH-dependent reduction of coniferaldehyde, 5-hydroxyconiferaldehyde, sinapaldehyde, 4-coumaraldehyde and caffeyl aldehyde to their respective alcohols. The chain is Probable cinnamyl alcohol dehydrogenase (CAD) from Eucalyptus globulus (Tasmanian blue gum).